A 150-amino-acid polypeptide reads, in one-letter code: Transcription antitermination protein NusB (150 aa).

The protein belongs to the NusB family.

Its function is as follows. Involved in transcription antitermination. Required for transcription of ribosomal RNA (rRNA) genes. Binds specifically to the boxA antiterminator sequence of the ribosomal RNA (rrn) operons. The polypeptide is Transcription antitermination protein NusB (Saccharophagus degradans (strain 2-40 / ATCC 43961 / DSM 17024)).